A 355-amino-acid chain; its full sequence is Probable butyrate kinase (355 aa).

It belongs to the acetokinase family.

Its subcellular location is the cytoplasm. It catalyses the reaction butanoate + ATP = butanoyl phosphate + ADP. The sequence is that of Probable butyrate kinase from Listeria innocua serovar 6a (strain ATCC BAA-680 / CLIP 11262).